Reading from the N-terminus, the 290-residue chain is 4-hydroxy-3-methylbut-2-enyl diphosphate reductase (290 aa).

A [4Fe-4S] cluster-binding site is contributed by cysteine 13. (2E)-4-hydroxy-3-methylbut-2-enyl diphosphate contacts are provided by histidine 41 and histidine 75. Histidine 41 and histidine 75 together coordinate dimethylallyl diphosphate. 2 residues coordinate isopentenyl diphosphate: histidine 41 and histidine 75. A [4Fe-4S] cluster-binding site is contributed by cysteine 97. (2E)-4-hydroxy-3-methylbut-2-enyl diphosphate is bound at residue histidine 129. Histidine 129 is a dimethylallyl diphosphate binding site. Isopentenyl diphosphate is bound at residue histidine 129. The Proton donor role is filled by glutamate 131. Threonine 167 serves as a coordination point for (2E)-4-hydroxy-3-methylbut-2-enyl diphosphate. [4Fe-4S] cluster is bound at residue cysteine 198. Residues serine 226, serine 227, asparagine 228, and serine 270 each contribute to the (2E)-4-hydroxy-3-methylbut-2-enyl diphosphate site. Residues serine 226, serine 227, asparagine 228, and serine 270 each coordinate dimethylallyl diphosphate. The isopentenyl diphosphate site is built by serine 226, serine 227, asparagine 228, and serine 270.

Belongs to the IspH family. Requires [4Fe-4S] cluster as cofactor.

It carries out the reaction isopentenyl diphosphate + 2 oxidized [2Fe-2S]-[ferredoxin] + H2O = (2E)-4-hydroxy-3-methylbut-2-enyl diphosphate + 2 reduced [2Fe-2S]-[ferredoxin] + 2 H(+). The catalysed reaction is dimethylallyl diphosphate + 2 oxidized [2Fe-2S]-[ferredoxin] + H2O = (2E)-4-hydroxy-3-methylbut-2-enyl diphosphate + 2 reduced [2Fe-2S]-[ferredoxin] + 2 H(+). It participates in isoprenoid biosynthesis; dimethylallyl diphosphate biosynthesis; dimethylallyl diphosphate from (2E)-4-hydroxy-3-methylbutenyl diphosphate: step 1/1. The protein operates within isoprenoid biosynthesis; isopentenyl diphosphate biosynthesis via DXP pathway; isopentenyl diphosphate from 1-deoxy-D-xylulose 5-phosphate: step 6/6. Catalyzes the conversion of 1-hydroxy-2-methyl-2-(E)-butenyl 4-diphosphate (HMBPP) into a mixture of isopentenyl diphosphate (IPP) and dimethylallyl diphosphate (DMAPP). Acts in the terminal step of the DOXP/MEP pathway for isoprenoid precursor biosynthesis. The sequence is that of 4-hydroxy-3-methylbut-2-enyl diphosphate reductase from Bacteroides fragilis (strain ATCC 25285 / DSM 2151 / CCUG 4856 / JCM 11019 / LMG 10263 / NCTC 9343 / Onslow / VPI 2553 / EN-2).